A 1068-amino-acid polypeptide reads, in one-letter code: Phosphatidylinositol 4,5-bisphosphate 3-kinase catalytic subunit alpha isoform (1068 aa).

The PI3K-ABD domain maps to 16-105; it reads MPPRILVECL…QPFLKVIEPV (90 aa). The region spanning 187-289 is the PI3K-RBD domain; sequence KGQIIVVIWV…GRMPNLMLMA (103 aa). One can recognise a C2 PI3K-type domain in the interval 330–487; it reads INSALRIKIL…DWFSSVVKFP (158 aa). The PIK helical domain maps to 517–694; sequence LARDNELREN…GLLLESYCRA (178 aa). Positions 765 to 1051 constitute a PI3K/PI4K catalytic domain; that stretch reads RLEECRIMSS…QMNDAHHGGW (287 aa). The interval 771 to 777 is G-loop; it reads IMSSAKR. The catalytic loop stretch occupies residues 912–920; it reads GIGDRHNSN. Residues 931 to 957 are activation loop; it reads HIDFGHFLDHKKKKFGYKRERVPFVLT.

Belongs to the PI3/PI4-kinase family. As to quaternary structure, heterodimer of a catalytic subunit PIK3CA and a p85 regulatory subunit (PIK3R1, PIK3R2 or PIK3R3). Interacts with IRS1 in nuclear extracts. Interacts with RUFY3. Interacts with RASD2. Interacts with APPL1. Interacts with HRAS and KRAS. Interaction with HRAS/KRAS is required for PI3K pathway signaling and cell proliferation stimulated by EGF and FGF2. Interacts with FAM83B; activates the PI3K/AKT signaling cascade.

It catalyses the reaction a 1,2-diacyl-sn-glycero-3-phospho-(1D-myo-inositol-4,5-bisphosphate) + ATP = a 1,2-diacyl-sn-glycero-3-phospho-(1D-myo-inositol-3,4,5-trisphosphate) + ADP + H(+). The enzyme catalyses a 1,2-diacyl-sn-glycero-3-phospho-(1D-myo-inositol) + ATP = a 1,2-diacyl-sn-glycero-3-phospho-(1D-myo-inositol-3-phosphate) + ADP + H(+). The catalysed reaction is L-seryl-[protein] + ATP = O-phospho-L-seryl-[protein] + ADP + H(+). It carries out the reaction 1,2-dioctanoyl-sn-glycero-3-phospho-(1D-myo-inositol-4,5-bisphosphate) + ATP = 1,2-dioctanoyl-sn-glycero-3-phospho-(1D-myo-inositol-3,4,5-trisphosphate) + ADP + H(+). It catalyses the reaction 1-octadecanoyl-2-(5Z,8Z,11Z,14Z)-eicosatetraenoyl-sn-glycero-3-phospho-1D-myo-inositol 4,5-bisphosphate + ATP = 1-octadecanoyl-2-(5Z,8Z,11Z,14Z-eicosatetraenoyl)-sn-glycero-3-phospho-(1D-myo-inositol 3,4,5-triphosphate) + ADP + H(+). It functions in the pathway phospholipid metabolism; phosphatidylinositol phosphate biosynthesis. Functionally, phosphoinositide-3-kinase (PI3K) phosphorylates phosphatidylinositol (PI) and its phosphorylated derivatives at position 3 of the inositol ring to produce 3-phosphoinositides. Uses ATP and PtdIns(4,5)P2 (phosphatidylinositol 4,5-bisphosphate) to generate phosphatidylinositol 3,4,5-trisphosphate (PIP3). PIP3 plays a key role by recruiting PH domain-containing proteins to the membrane, including AKT1 and PDPK1, activating signaling cascades involved in cell growth, survival, proliferation, motility and morphology. Participates in cellular signaling in response to various growth factors. Involved in the activation of AKT1 upon stimulation by receptor tyrosine kinases ligands such as EGF, insulin, IGF1, VEGFA and PDGF. Involved in signaling via insulin-receptor substrate (IRS) proteins. Essential in endothelial cell migration during vascular development through VEGFA signaling, possibly by regulating RhoA activity. Required for lymphatic vasculature development, possibly by binding to RAS and by activation by EGF and FGF2, but not by PDGF. Regulates invadopodia formation through the PDPK1-AKT1 pathway. Participates in cardiomyogenesis in embryonic stem cells through a AKT1 pathway. Participates in vasculogenesis in embryonic stem cells through PDK1 and protein kinase C pathway. Also has serine-protein kinase activity: phosphorylates PIK3R1 (p85alpha regulatory subunit), EIF4EBP1 and HRAS. Plays a role in the positive regulation of phagocytosis and pinocytosis. The protein is Phosphatidylinositol 4,5-bisphosphate 3-kinase catalytic subunit alpha isoform (Pik3ca) of Mus musculus (Mouse).